The sequence spans 423 residues: UPF0229 protein Pput_0430 (423 aa).

Residues 81 to 108 are disordered; sequence EFTAGEHIPRPQGGGGGGGRGKAGNSGE. Residues 92–107 show a composition bias toward gly residues; it reads QGGGGGGGRGKAGNSG.

The protein belongs to the UPF0229 family.

This is UPF0229 protein Pput_0430 from Pseudomonas putida (strain ATCC 700007 / DSM 6899 / JCM 31910 / BCRC 17059 / LMG 24140 / F1).